A 212-amino-acid polypeptide reads, in one-letter code: Pyrrolidone-carboxylate peptidase (212 aa).

Residues E78, C141, and H165 contribute to the active site.

It belongs to the peptidase C15 family. In terms of assembly, homotetramer.

It localises to the cytoplasm. The catalysed reaction is Release of an N-terminal pyroglutamyl group from a polypeptide, the second amino acid generally not being Pro.. Functionally, removes 5-oxoproline from various penultimate amino acid residues except L-proline. This is Pyrrolidone-carboxylate peptidase from Staphylococcus aureus (strain Mu3 / ATCC 700698).